The sequence spans 306 residues: Pantothenate kinase (306 aa).

91-98 (GSVAVGKS) contributes to the ATP binding site.

Belongs to the prokaryotic pantothenate kinase family.

It is found in the cytoplasm. The enzyme catalyses (R)-pantothenate + ATP = (R)-4'-phosphopantothenate + ADP + H(+). It functions in the pathway cofactor biosynthesis; coenzyme A biosynthesis; CoA from (R)-pantothenate: step 1/5. This chain is Pantothenate kinase, found in Streptococcus pyogenes serotype M49 (strain NZ131).